A 198-amino-acid chain; its full sequence is Segregation and condensation protein B (198 aa).

Positions 168-198 (KLADPATDEPDQNEMDLFFDRFNQSKEQEEE) are disordered.

Belongs to the ScpB family. In terms of assembly, homodimer. Homodimerization may be required to stabilize the binding of ScpA to the Smc head domains. Component of a cohesin-like complex composed of ScpA, ScpB and the Smc homodimer, in which ScpA and ScpB bind to the head domain of Smc. The presence of the three proteins is required for the association of the complex with DNA.

The protein localises to the cytoplasm. Its function is as follows. Participates in chromosomal partition during cell division. May act via the formation of a condensin-like complex containing Smc and ScpA that pull DNA away from mid-cell into both cell halves. The polypeptide is Segregation and condensation protein B (Listeria monocytogenes serotype 4b (strain CLIP80459)).